Reading from the N-terminus, the 477-residue chain is Actin-related protein 7 (477 aa).

It belongs to the actin family. Forms a heterodimer with ARP9. Interacts with NPL6. Component of the two forms of the RSC complex composed of at least either RSC1 or RSC2, and ARP7, ARP9, LDB7, NPL6, RSC3, RSC30, RSC4, RSC58, RSC6, RSC8, RSC9, SFH1, STH1, HTL1 and probably RTT102. The complexes interact with histone and histone variant components of centromeric chromatin. Component of the SWI/SNF global transcription activator complex. The 1.14 MDa SWI/SNF complex is composed of 11 different subunits: one copy each of SWI1, SNF2/SWI2, SNF5, SNF12/SWP73, ARP7/SWP61, ARP9/SWP59; two copies each of SWI3, SNF6, SNF11, SWP82; and three copies of TAF14/SWP29.

Its subcellular location is the nucleus. Functionally, component of the chromatin structure remodeling complex (RSC), which is involved in transcription regulation and nucleosome positioning. RSC is responsible for the transfer of a histone octamer from a nucleosome core particle to naked DNA. The reaction requires ATP and involves an activated RSC-nucleosome intermediate. Remodeling reaction also involves DNA translocation, DNA twist and conformational change. As a reconfigurer of centromeric and flanking nucleosomes, RSC complex is required both for proper kinetochore function in chromosome segregation and, via a PKC1-dependent signaling pathway, for organization of the cellular cytoskeleton. This subunit is involved in transcriptional regulation. Heterodimer of ARP7 and ARP9 functions with HMG box proteins to facilitate proper chromatin architecture. Heterodimer formation is necessary for assembly into RSC complex. Part of the SWI/SNF complex, an ATP-dependent chromatin remodeling complex, is required for the positive and negative regulation of gene expression of a large number of genes. It changes chromatin structure by altering DNA-histone contacts within a nucleosome, leading eventually to a change in nucleosome position, thus facilitating or repressing binding of gene-specific transcription factors. This Saccharomyces cerevisiae (strain ATCC 204508 / S288c) (Baker's yeast) protein is Actin-related protein 7 (ARP7).